A 476-amino-acid polypeptide reads, in one-letter code: Trigger factor (476 aa).

The region spanning Gly-169–Leu-254 is the PPIase FKBP-type domain. Residues Ser-437 to Glu-476 are disordered. The segment covering Glu-450–Lys-460 has biased composition (basic and acidic residues).

It belongs to the FKBP-type PPIase family. Tig subfamily.

The protein localises to the cytoplasm. It catalyses the reaction [protein]-peptidylproline (omega=180) = [protein]-peptidylproline (omega=0). Involved in protein export. Acts as a chaperone by maintaining the newly synthesized protein in an open conformation. Functions as a peptidyl-prolyl cis-trans isomerase. This is Trigger factor from Chelativorans sp. (strain BNC1).